The chain runs to 618 residues: MGSSQEEGLPCQPSQPDHDTGGHGGPDLEGAGRVSTTPGPPGLLTSHPPADSDDTDATGPPAALLEGLLLGDGKPSPHSTRPGPFFYIGGNNGAAIISSYCKSKGWRRIQDSRREDYVLKWCEVKSRDSYGSFREGEQLLYQLPNNKLLTTKIGLLSTLRGRAWAMSKASKAPGGTQARLGKDATAPTLEDLPWTSPGHLRPQRVLRMEEFFPETYRLDLKHEREAFFTLFDETQIWICKPTASNQGKGIFLLRNQEEVAALQAKTRRAEDDPIHHKSPFRGPQARVVQRYIQNPLLLDGRKFDVRSYLLIACTTPYMIFFSHGYARLTLSLYDPHSSDLSGHLTNQFMQKKSPLYVLLKEDTVWSMERLNRYINTTFWKARGLPKDWVFTTLTKRMQQIMAHCFLAAKSKLECKLGYFDLIGCDFLIDDNFKVWLLEMNSNPALHTNCEVLKEVIPGVVIETLDLALETFQKSLRGQKMLPLLSQRRFVLLHNGEADVWPRLGGSCSLRRRLPPPTRQAKSSGPPTPRAPDQPGTRRPVPPPLAPQRPQLPGPSPDPDSAHDGQPQAPGTGDRHPEQEPSPGTAKEEREEPENARPWGGHPRPTPHAPATLPAFRDL.

Residues 1 to 76 (MGSSQEEGLP…GLLLGDGKPS (76 aa)) form a disordered region. The span at 57-74 (ATGPPAALLEGLLLGDGK) shows a compositional bias: low complexity. In terms of domain architecture, TTL spans 82 to 479 (PGPFFYIGGN…TFQKSLRGQK (398 aa)). Residues K240, 246–247 (QG), 289–292 (QRYI), 302–304 (KFD), and 345–346 (TN) each bind ATP. Q246 provides a ligand contact to a protein. Mg(2+)-binding residues include D425, E438, and N440. The segment at 503-618 (LGGSCSLRRR…PATLPAFRDL (116 aa)) is disordered. A compositionally biased stretch (pro residues) spans 539–557 (PVPPPLAPQRPQLPGPSPD). Basic and acidic residues predominate over residues 585–594 (AKEEREEPEN).

Mg(2+) serves as cofactor.

It is found in the cytoplasm. The protein resides in the cytoskeleton. The protein localises to the cell projection. It localises to the cilium. Its subcellular location is the cilium axoneme. It carries out the reaction (glycyl)(n)-glycyl-L-glutamyl-[protein] + glycine + ATP = (glycyl)(n+1)-glycyl-L-glutamyl-[protein] + ADP + phosphate + H(+). Polyglycylase which modifies both tubulin and non-tubulin proteins, generating polyglycine side chains of variable lengths on the gamma-carboxyl groups of specific glutamate residues of target proteins. Involved in the elongation step rather than the initiation step of the polyglycylation reaction. Polyglycylates alpha-tubulin and beta-tubulin. Polyglycylates non-tubulin proteins such as nucleosome assembly protein NAP1. This is Protein polyglycylase TTLL10 (TTLL10) from Macaca fascicularis (Crab-eating macaque).